Reading from the N-terminus, the 242-residue chain is N-glycosylase/DNA lyase (242 aa).

Residues Gln25, Ser52, and Trp63 each contribute to the 8-oxoguanine site. A helix-hairpin-helix region spans residues 119–183 (KSYYRDMNRL…VDARIERITR (65 aa)). Lys143 functions as the Schiff-base intermediate with DNA in the catalytic mechanism. Residues Phe147 and Pro173 each contribute to the 8-oxoguanine site. Asp175 is an active-site residue. Positions 209 and 213 each coordinate 8-oxoguanine.

It belongs to the archaeal N-glycosylase/DNA lyase (AGOG) family.

It carries out the reaction 2'-deoxyribonucleotide-(2'-deoxyribose 5'-phosphate)-2'-deoxyribonucleotide-DNA = a 3'-end 2'-deoxyribonucleotide-(2,3-dehydro-2,3-deoxyribose 5'-phosphate)-DNA + a 5'-end 5'-phospho-2'-deoxyribonucleoside-DNA + H(+). Its function is as follows. DNA repair enzyme that is part of the base excision repair (BER) pathway; protects from oxidative damage by removing the major product of DNA oxidation, 8-oxoguanine (GO), from single- and double-stranded DNA substrates. The protein is N-glycosylase/DNA lyase of Methanopyrus kandleri (strain AV19 / DSM 6324 / JCM 9639 / NBRC 100938).